Reading from the N-terminus, the 544-residue chain is MKKRFIFITGGVVSSLGKGITTAALAAVLEARNLNVTIIKLDPYINIDPGTISPEQHGEVFVTEDGAETDLDLGHYERFIRTKMTRKNNFTTGSIYSEVLNKERKGEYLGATIQIIPHITNTIKKRIISCAHNVDIVFVEVGGTVGDIESLPFLEAIRQIAIDIGRENTIYIHLTLVPYISITKEIKTKPTQHSVKELLSIGIQPDILICRSQYTIPIQARSKIALFCNVLKESVISLINVDSIYKIPKLLNLQKVDQIICHHFKLKVPPADLSEWDEVIYNELNTNNVVTIGIIGKYIKSPDAYKSVIEALKHGGIKNKTVVKIKLINSEKIEKNGTNRLNCLHGILIPGGFGHRGITGKLITVEYARINNVPFFGICLGMQIALIEFFRNVIGLKDANSTEFSQNCQHPIISLIPKGNRNLPNINNNVKKKLGGTMRLGNQTCYLKQDSISHKLYGKNIISERHRHRYEVNNKFINKIEKYGLKITGKSKKNKLVEIIELSNHLWFIACQFHPEFTSTPRDGHPLFIDFIKAAIQYKKIKQK.

Residues methionine 1–leucine 266 are amidoligase domain. Serine 14 is a binding site for CTP. Serine 14 provides a ligand contact to UTP. Residues serine 15–isoleucine 20 and aspartate 72 contribute to the ATP site. The Mg(2+) site is built by aspartate 72 and glutamate 140. Residues aspartate 147 to glutamate 149, lysine 187 to glutamine 192, and lysine 223 each bind CTP. UTP is bound by residues lysine 187 to glutamine 192 and lysine 223. Positions threonine 291–isoleucine 541 constitute a Glutamine amidotransferase type-1 domain. Glycine 352 is a binding site for L-glutamine. The active-site Nucleophile; for glutamine hydrolysis is cysteine 379. L-glutamine contacts are provided by residues leucine 380–glutamine 383, glutamate 403, and arginine 469. Active-site residues include histidine 514 and glutamate 516.

The protein belongs to the CTP synthase family. In terms of assembly, homotetramer.

The catalysed reaction is UTP + L-glutamine + ATP + H2O = CTP + L-glutamate + ADP + phosphate + 2 H(+). It carries out the reaction L-glutamine + H2O = L-glutamate + NH4(+). The enzyme catalyses UTP + NH4(+) + ATP = CTP + ADP + phosphate + 2 H(+). It functions in the pathway pyrimidine metabolism; CTP biosynthesis via de novo pathway; CTP from UDP: step 2/2. Allosterically activated by GTP, when glutamine is the substrate; GTP has no effect on the reaction when ammonia is the substrate. The allosteric effector GTP functions by stabilizing the protein conformation that binds the tetrahedral intermediate(s) formed during glutamine hydrolysis. Inhibited by the product CTP, via allosteric rather than competitive inhibition. Its function is as follows. Catalyzes the ATP-dependent amination of UTP to CTP with either L-glutamine or ammonia as the source of nitrogen. Regulates intracellular CTP levels through interactions with the four ribonucleotide triphosphates. The chain is CTP synthase from Buchnera aphidicola subsp. Baizongia pistaciae (strain Bp).